The sequence spans 243 residues: tRNA (guanine-N(1)-)-methyltransferase (243 aa).

Residues Gly-111 and 130–135 (IGDYVL) contribute to the S-adenosyl-L-methionine site.

It belongs to the RNA methyltransferase TrmD family. As to quaternary structure, homodimer.

It is found in the cytoplasm. The enzyme catalyses guanosine(37) in tRNA + S-adenosyl-L-methionine = N(1)-methylguanosine(37) in tRNA + S-adenosyl-L-homocysteine + H(+). Functionally, specifically methylates guanosine-37 in various tRNAs. The protein is tRNA (guanine-N(1)-)-methyltransferase of Acholeplasma laidlawii (strain PG-8A).